A 1648-amino-acid chain; its full sequence is Kinesin-like protein KIF14 (1648 aa).

Residues 1–27 (MSLHSTHNRNNSGDILDIPSSQNSSSL) are disordered. Positions 1-356 (MSLHSTHNRN…AGKDPLKVEN (356 aa)) are required for PRC1-binding. Phosphoserine occurs at positions 12 and 272. Threonine 277 bears the Phosphothreonine mark. Serine 346 is subject to Phosphoserine. The segment at 356–737 (NSQVTVAVRV…AAQRNSRNID (382 aa)) is required for microtubule-binding with high affinity. Residues 358 to 701 (QVTVAVRVRP…LRYANQARLI (344 aa)) enclose the Kinesin motor domain. Position 447–454 (447–454 (GQTGSGKS)) interacts with ATP. Residues 705–791 (AKVNEDMNAK…QETKELQKAG (87 aa)) adopt a coiled-coil conformation. The FHA domain maps to 825-891 (TTVGKYKPNS…LRHGDRVILG (67 aa)). The required for CIT-binding stretch occupies residues 901-1648 (PVEVQKGKRP…ECTPSRIQWV (748 aa)). Threonine 915 carries the post-translational modification Phosphothreonine. Residues 922–1079 (KDFEFAKNEL…QNRNNRDKTF (158 aa)) are a coiled coil. Residues serine 937 and serine 1292 each carry the phosphoserine modification. Coiled coils occupy residues 1332-1348 (TNIARLEDELRQEVKKL) and 1468-1500 (ENIFAESKIKSFRRQVQEENFEYQDFKRMVNRA). Residues 1600–1648 (NTKEEHQQSKSSGIDGSKNKGVPKRVYELHGSSPAVSSEECTPSRIQWV) form a disordered region. Residues 1633 to 1648 (PAVSSEECTPSRIQWV) are compositionally biased toward polar residues.

This sequence belongs to the TRAFAC class myosin-kinesin ATPase superfamily. Kinesin family. In terms of assembly, directly interacts with PRC1 within a complex also containing KIF4A, KIF20A and KIF23; targets to the central spindle. Directly interacts with CIT depending on the activation state of the kinase (stronger interaction with the kinase-dead form); targets to the midbody. Interacts with ARRB2; the interaction is detected in the nucleus upon OR1D2 stimulation. Interacts with AKT1; the interaction is detected in the plasma membrane upon INS stimulation and promotes AKT1 phosphorylation. Interacts with SVIL; at midbody during cytokinesis. Interacts with RADIL (via PDZ domain); recruits RADIL to the microtubule network restricting RADIL from interaction with activated RAP1A.

It is found in the nucleus. Its subcellular location is the cytoplasm. The protein resides in the cytoskeleton. It localises to the spindle. The protein localises to the midbody. Its function is as follows. Microtubule motor protein that binds to microtubules with high affinity through each tubulin heterodimer and has an ATPase activity. Plays a role in many processes like cell division, cytokinesis and also in cell proliferation and apoptosis. During cytokinesis, targets to central spindle and midbody through its interaction with PRC1 and CIT respectively. Regulates cell growth through regulation of cell cycle progression and cytokinesis. During cell cycle progression acts through SCF-dependent proteasomal ubiquitin-dependent protein catabolic process which controls CDKN1B degradation, resulting in positive regulation of cyclins, including CCNE1, CCND1 and CCNB1. During late neurogenesis, regulates the cerebellar, cerebral cortex and olfactory bulb development through regulation of apoptosis, cell proliferation and cell division. Also is required for chromosome congression and alignment during mitotic cell cycle process. Regulates cell spreading, focal adhesion dynamics, and cell migration through its interaction with RADIL resulting in regulation of RAP1A-mediated inside-out integrin activation by tethering RADIL on microtubules. In Homo sapiens (Human), this protein is Kinesin-like protein KIF14.